We begin with the raw amino-acid sequence, 288 residues long: Hypersensitive-induced response protein-like protein 1 (288 aa).

Residue G2 is the site of N-myristoyl glycine attachment.

Its function is as follows. Positive regulator of hypersensitive response (HR)-like cell death. May be involved in potassium ion channel regulation. This chain is Hypersensitive-induced response protein-like protein 1, found in Oryza sativa subsp. japonica (Rice).